The sequence spans 653 residues: DNA mismatch repair protein MutL (653 aa).

The tract at residues 368–413 (EVSQVAEPEGKTDITNKKETETKEKAEKKENKQEEKEEKTSAPEYV) is disordered. Residues 375-408 (PEGKTDITNKKETETKEKAEKKENKQEEKEEKTS) are compositionally biased toward basic and acidic residues.

This sequence belongs to the DNA mismatch repair MutL/HexB family.

Its function is as follows. This protein is involved in the repair of mismatches in DNA. It is required for dam-dependent methyl-directed DNA mismatch repair. May act as a 'molecular matchmaker', a protein that promotes the formation of a stable complex between two or more DNA-binding proteins in an ATP-dependent manner without itself being part of a final effector complex. The polypeptide is DNA mismatch repair protein MutL (Lactobacillus delbrueckii subsp. bulgaricus (strain ATCC 11842 / DSM 20081 / BCRC 10696 / JCM 1002 / NBRC 13953 / NCIMB 11778 / NCTC 12712 / WDCM 00102 / Lb 14)).